A 716-amino-acid chain; its full sequence is UvrABC system protein C (716 aa).

Residues 14–94 enclose the GIY-YIG domain; sequence AEPGCYLMKD…IKRHRPRFNI (81 aa). A UVR domain is found at 206–241; the sequence is TELVERLHGRMDEAADALRFEDAARLRDQLQAVERS.

Belongs to the UvrC family. As to quaternary structure, interacts with UvrB in an incision complex.

Its subcellular location is the cytoplasm. Functionally, the UvrABC repair system catalyzes the recognition and processing of DNA lesions. UvrC both incises the 5' and 3' sides of the lesion. The N-terminal half is responsible for the 3' incision and the C-terminal half is responsible for the 5' incision. This is UvrABC system protein C from Anaeromyxobacter sp. (strain Fw109-5).